Consider the following 453-residue polypeptide: Ribulose bisphosphate carboxylase large chain (453 aa).

A propeptide spanning residues 1–2 is cleaved from the precursor; the sequence is MS. Pro-3 carries the post-translational modification N-acetylproline. Lys-14 carries the N6,N6,N6-trimethyllysine modification. Residues Asn-123 and Thr-173 each coordinate substrate. Lys-175 acts as the Proton acceptor in catalysis. Lys-177 is a binding site for substrate. Residues Lys-201, Asp-203, and Glu-204 each contribute to the Mg(2+) site. Position 201 is an N6-carboxylysine (Lys-201). His-294 serves as the catalytic Proton acceptor. Positions 295, 327, and 379 each coordinate substrate.

This sequence belongs to the RuBisCO large chain family. Type I subfamily. As to quaternary structure, heterohexadecamer of 8 large chains and 8 small chains; disulfide-linked. The disulfide link is formed within the large subunit homodimers. Mg(2+) is required as a cofactor. The disulfide bond which can form in the large chain dimeric partners within the hexadecamer appears to be associated with oxidative stress and protein turnover.

The protein localises to the plastid. It localises to the chloroplast. It catalyses the reaction 2 (2R)-3-phosphoglycerate + 2 H(+) = D-ribulose 1,5-bisphosphate + CO2 + H2O. The catalysed reaction is D-ribulose 1,5-bisphosphate + O2 = 2-phosphoglycolate + (2R)-3-phosphoglycerate + 2 H(+). In terms of biological role, ruBisCO catalyzes two reactions: the carboxylation of D-ribulose 1,5-bisphosphate, the primary event in carbon dioxide fixation, as well as the oxidative fragmentation of the pentose substrate in the photorespiration process. Both reactions occur simultaneously and in competition at the same active site. This is Ribulose bisphosphate carboxylase large chain from Galium corsicum.